The chain runs to 516 residues: GMP synthase [glutamine-hydrolyzing] (516 aa).

Residues 8 to 198 (KILILDFGSQ…VVNICGCDTL (191 aa)) form the Glutamine amidotransferase type-1 domain. Cys-84 (nucleophile) is an active-site residue. Active-site residues include His-172 and Glu-174. A GMPS ATP-PPase domain is found at 199–391 (WNIENIIEND…LGLPYNMLYR (193 aa)). 226 to 232 (SGGVDSS) serves as a coordination point for ATP.

In terms of assembly, homodimer.

It catalyses the reaction XMP + L-glutamine + ATP + H2O = GMP + L-glutamate + AMP + diphosphate + 2 H(+). It participates in purine metabolism; GMP biosynthesis; GMP from XMP (L-Gln route): step 1/1. Functionally, catalyzes the synthesis of GMP from XMP. This chain is GMP synthase [glutamine-hydrolyzing], found in Francisella tularensis subsp. mediasiatica (strain FSC147).